The sequence spans 961 residues: DNA repair endonuclease XPF (961 aa).

Disordered stretches follow at residues 1–27 (MADS…SADT), 451–485 (NYAK…PPLA), and 674–693 (PTDE…QATK). Residues 13–22 (TENERPKEVE) are compositionally biased toward basic and acidic residues. Over residues 458-469 (TRSAPPKNVSSN) the composition is skewed to polar residues. The 81-residue stretch at 697–777 (KVIVDMREFR…KPILLIEFDQ (81 aa)) folds into the ERCC4 domain.

Belongs to the XPF family. Heterodimer. Interacts with hdm.

The protein localises to the nucleus. In terms of biological role, implicated in recombination events during meiosis, mostly in meiotic exchange. May directly resolve Holliday junctions within recombination intermediates leading to DNA exchange. Also required for the repair of mismatches within meiotic heteroduplex DNA and for nucleotide excision repair. The sequence is that of DNA repair endonuclease XPF (mei-9) from Drosophila melanogaster (Fruit fly).